We begin with the raw amino-acid sequence, 222 residues long: Putative N-acetylmannosamine-6-phosphate 2-epimerase (222 aa).

This sequence belongs to the NanE family.

The catalysed reaction is an N-acyl-D-glucosamine 6-phosphate = an N-acyl-D-mannosamine 6-phosphate. Its pathway is amino-sugar metabolism; N-acetylneuraminate degradation; D-fructose 6-phosphate from N-acetylneuraminate: step 3/5. In terms of biological role, converts N-acetylmannosamine-6-phosphate (ManNAc-6-P) to N-acetylglucosamine-6-phosphate (GlcNAc-6-P). The sequence is that of Putative N-acetylmannosamine-6-phosphate 2-epimerase from Staphylococcus aureus (strain USA300).